The sequence spans 202 residues: CASP-like protein 2B2 (202 aa).

Residues Met-1–Arg-29 are Cytoplasmic-facing. Residues Leu-30 to Val-50 form a helical membrane-spanning segment. The Extracellular portion of the chain corresponds to Gly-51 to Lys-72. Residues Ala-73 to Val-93 form a helical membrane-spanning segment. The Cytoplasmic portion of the chain corresponds to Arg-94–Asp-118. A helical membrane pass occupies residues Gln-119–Ala-139. Residues Lys-140–Glu-164 lie on the Extracellular side of the membrane. Residues Gly-165–Phe-185 traverse the membrane as a helical segment. The Cytoplasmic segment spans residues Ser-186–Trp-202.

The protein belongs to the Casparian strip membrane proteins (CASP) family. In terms of assembly, homodimer and heterodimers.

Its subcellular location is the cell membrane. This is CASP-like protein 2B2 from Populus trichocarpa (Western balsam poplar).